We begin with the raw amino-acid sequence, 91 residues long: Small ribosomal subunit protein uS15 (91 aa).

This sequence belongs to the universal ribosomal protein uS15 family. As to quaternary structure, part of the 30S ribosomal subunit. Forms a bridge to the 50S subunit in the 70S ribosome, contacting the 23S rRNA.

One of the primary rRNA binding proteins, it binds directly to 16S rRNA where it helps nucleate assembly of the platform of the 30S subunit by binding and bridging several RNA helices of the 16S rRNA. In terms of biological role, forms an intersubunit bridge (bridge B4) with the 23S rRNA of the 50S subunit in the ribosome. The chain is Small ribosomal subunit protein uS15 from Amoebophilus asiaticus (strain 5a2).